The sequence spans 119 residues: Holo-[acyl-carrier-protein] synthase (119 aa).

Residues aspartate 8 and glutamate 58 each contribute to the Mg(2+) site.

This sequence belongs to the P-Pant transferase superfamily. AcpS family. Requires Mg(2+) as cofactor.

It is found in the cytoplasm. It catalyses the reaction apo-[ACP] + CoA = holo-[ACP] + adenosine 3',5'-bisphosphate + H(+). Its function is as follows. Transfers the 4'-phosphopantetheine moiety from coenzyme A to a Ser of acyl-carrier-protein. This chain is Holo-[acyl-carrier-protein] synthase, found in Bacillus cereus (strain ZK / E33L).